Reading from the N-terminus, the 47-residue chain is FLEYLDKDRVRVQLPGLSQELLQKTPGFSGADLANLLNEAAILAGRR.

This sequence in the N-terminal section; belongs to the AAA ATPase family. It in the C-terminal section; belongs to the peptidase M41 family. Requires Zn(2+) as cofactor.

Its subcellular location is the plastid. It is found in the chloroplast membrane. In terms of biological role, seems to act as an ATP-dependent zinc metallopeptidase. The sequence is that of ATP-dependent zinc metalloprotease FTSH, chloroplastic from Populus euphratica (Euphrates poplar).